Reading from the N-terminus, the 710-residue chain is Solute carrier organic anion transporter family member 3A1 (710 aa).

M1 bears the N-acetylmethionine mark. Over residues 1-15 (MQGKKPGGSSGGGRS) the composition is skewed to gly residues. Residues 1-25 (MQGKKPGGSSGGGRSGELQGDEAQR) are disordered. The Cytoplasmic segment spans residues 1–40 (MQGKKPGGSSGGGRSGELQGDEAQRNKKKKKKVSCFSNIK). A helical transmembrane segment spans residues 41 to 60 (IFLVSECALMLAQGTVGAYL). Topologically, residues 61-79 (VSVLTTLERRFNLQSADVG) are extracellular. A helical membrane pass occupies residues 80–100 (VIASSFEIGNLALILFVSYFG). The Cytoplasmic segment spans residues 101-106 (ARGHRP). Residues 107–131 (RLIGCGGIVMALGALLSALPEFLTH) traverse the membrane as a helical segment. At 132–174 (QYKYEAGEIRWGAEGRDVCATNGSSSDEGPDPDLICRNRTATN) the chain is on the extracellular side. Residues N153 and N169 are each glycosylated (N-linked (GlcNAc...) asparagine). Residues 175 to 203 (MMYLLLIGAQVLLGIGATPVQPLGVSYID) form a helical membrane-spanning segment. Residues 204-222 (DHVRRKDSSLYIGILFTML) are Cytoplasmic-facing. The helical transmembrane segment at 223–243 (VFGPACGFILGSFCTKIYVDA) threads the bilayer. At 244 to 261 (VFIDTSNLDITPDDPRWI) the chain is on the extracellular side. A helical membrane pass occupies residues 262–286 (GAWWGGFLLCGALLFFSSLLMFGFP). Residues 287-344 (QSLPPHSDPGMESEQAMLPEREYERPKPSNGVLRHPLEPDSSASCFQQLRVIPKVTKH) lie on the Cytoplasmic side of the membrane. A helical membrane pass occupies residues 345 to 366 (LLSNPVFTCIVLAACMEIAVVA). Residues 367 to 386 (GFAAFLGKYLEQQFNLTTSS) lie on the Extracellular side of the membrane. N381 carries N-linked (GlcNAc...) asparagine glycosylation. The chain crosses the membrane as a helical span at residues 387 to 410 (ANQLLGMTAIPCACLGIFLGGLLV). Topologically, residues 411-414 (KKLS) are cytoplasmic. The chain crosses the membrane as a helical span at residues 415 to 438 (LSALGAIRMAMLVNLVSTACYVSF). Residues 439–539 (LFLGCDTGPV…PGCQEAFLTF (101 aa)) lie on the Extracellular side of the membrane. The N-linked (GlcNAc...) asparagine glycan is linked to N457. Residues 465-513 (LDPYSPCNNNCECQTDSFTPVCGADGITYLSACFAGCNSTNLTGCACLT) enclose the Kazal-like domain. 3 disulfides stabilise this stretch: C471–C497, C475–C486, and C477–C501. N502, N505, and N519 each carry an N-linked (GlcNAc...) asparagine glycan. Residues 540–562 (LCVMCVCSLIGAMAQTPSVIILI) traverse the membrane as a helical segment. Topologically, residues 563–571 (RTVSPELKS) are cytoplasmic. A helical transmembrane segment spans residues 572–597 (YALGVLFLLLRLLGFIPPPLIFGAGI). The Extracellular portion of the chain corresponds to 598–630 (DSTCLFWSTFCGEQGACVLYDNVVYRYLYVSIA). A helical membrane pass occupies residues 631-648 (IALKSFAFILYTTTWQCL). At 649–705 (RKNYKRYIKNHEGGLSTSEFFASTLTLDNLGRDPVPAHQTHRTKFIYNLEDHEWCEN) the chain is on the cytoplasmic side.

The protein belongs to the organo anion transporter (TC 2.A.60) family. Widely expressed.

Its subcellular location is the basolateral cell membrane. The protein localises to the apical cell membrane. It is found in the basal cell membrane. The catalysed reaction is L-thyroxine(out) = L-thyroxine(in). It catalyses the reaction prostaglandin E1(out) = prostaglandin E1(in). It carries out the reaction prostaglandin E2(out) = prostaglandin E2(in). The enzyme catalyses prostaglandin F2alpha(out) = prostaglandin F2alpha(in). The catalysed reaction is (5Z,8Z,11Z,14Z)-eicosatetraenoate(out) = (5Z,8Z,11Z,14Z)-eicosatetraenoate(in). It catalyses the reaction taurocholate(out) = taurocholate(in). It carries out the reaction glycocholate(out) = glycocholate(in). The enzyme catalyses estrone 3-sulfate(out) = estrone 3-sulfate(in). The catalysed reaction is argipressin(out) = argipressin(in). Putative organic anion antiporter with apparent broad substrate specificity. Recognizes various substrates including thyroid hormone L-thyroxine, prostanoids such as prostaglandin E1 and E2, bile acids such as taurocholate, glycolate and glycochenodeoxycholate and peptide hormones such as L-arginine vasopressin, likely operating in a tissue-specific manner. The transport mechanism, its electrogenicity and potential tissue-specific counterions remain to be elucidated. This is Solute carrier organic anion transporter family member 3A1 (Slco3a1) from Mus musculus (Mouse).